The following is a 317-amino-acid chain: Gamma-glutamyl hydrolase (317 aa).

Positions 1 to 24 are cleaved as a signal peptide; sequence MANLGYLLCLLGLLLCGLSSPGMS. In terms of domain architecture, Gamma-glutamyl hydrolase spans 25 to 317; sequence RPYNHGSERP…SSFQQAYMFD (293 aa). Asparagine 100 carries N-linked (GlcNAc...) (high mannose) asparagine glycosylation. Cysteine 133 serves as the catalytic Nucleophile. N-linked (GlcNAc...) (high mannose) asparagine glycans are attached at residues asparagine 162 and asparagine 188. N-linked (GlcNAc...) asparagine glycosylation is present at asparagine 202. Histidine 243 serves as the catalytic Proton donor. N-linked (GlcNAc...) asparagine glycosylation is present at asparagine 306.

The protein belongs to the peptidase C26 family. As to quaternary structure, homodimer. In terms of tissue distribution, isoform I (more expressed than isoform II in all tissues) is highly expressed in salivary gland, followed by kidney, liver, lung, stomach and uterus, and weakly expressed in small intestine, brain and fetal liver. Also expressed at a lower level in thymus, spleen and skeletal muscle. Also expressed in tumors.

The protein localises to the secreted. The protein resides in the extracellular space. Its subcellular location is the lysosome. It localises to the melanosome. The catalysed reaction is (6S)-5,6,7,8-tetrahydrofolyl-(gamma-L-Glu)(n) + (n-1) H2O = (6S)-5,6,7,8-tetrahydrofolate + (n-1) L-glutamate. Hydrolyzes the polyglutamate sidechains of pteroylpolyglutamates. Progressively removes gamma-glutamyl residues from pteroylpoly-gamma-glutamate to yield pteroyl-alpha-glutamate (folic acid) and free glutamate. May play an important role in the bioavailability of dietary pteroylpolyglutamates and in the metabolism of pteroylpolyglutamates and antifolates. This chain is Gamma-glutamyl hydrolase (Ggh), found in Mus musculus (Mouse).